Consider the following 235-residue polypeptide: Caveolin-1 (235 aa).

Over 1–161 (MSTEQDIKTE…LVSLLALPFT (161 aa)) the chain is Cytoplasmic. The segment at 29–72 (GEAVVAPEEPKPKKNWFTFGKKKAAPTDETNIEEGGAPGDEPVK) is disordered. The helical intramembrane region spans 162-182 (IIFAIFFGLLASINVFIIVPL). The Cytoplasmic portion of the chain corresponds to 183–235 (GKLLSIPGTLLAKLWNWLIHAIFDPIASAVGLIFSNFNIRKYGINQETTAPCV). Cys-234 carries S-palmitoyl cysteine lipidation.

This sequence belongs to the caveolin family. Homooligomer containing 14-16 monomers per oligomer.

The protein localises to the golgi apparatus membrane. It localises to the cell membrane. It is found in the membrane. The protein resides in the caveola. In terms of biological role, may act as a scaffolding protein within caveolar membranes. Interacts directly with G-protein alpha subunits and can functionally regulate their activity. The protein is Caveolin-1 (cav-1) of Caenorhabditis elegans.